Here is a 492-residue protein sequence, read N- to C-terminus: MVSWIRKNLLLVLTVSSVVLGALCGFLLRGLQLSPQNIMYISFPGELLMHMLKMMILPLIMSSLISGLAQLDARQSGKLGSLAVTYYMFTTAVAVVTGIFLVLVIHPGDPTIKKEIGTGTEGKTVSTVDTLLDLLRNMFPENVVQATFQQVQTKYIKVRPKVVKNNDSATLAALNNGSLDYVKASVEYTSGMNVLGVIVFCIAIGISLSQLGQEAHVMVQFFVIMDKVIMKLVMTVMWYSPFGILCLIMGKILEIHDLADTARMLAMYMVTVLSGLAIHSLISLPLIFFVTTKKNPYVFMRGLFQAWITGLGTASSSDTLPITYICLEENLGVDRRVTRFVLPVGATINMDGTALYEAVAAIFIAQINGVHLSFGQVVTVSLTATLASIGAASVPSAGLVTMLLVLTAVGLPVKDVSLIVAVDWLLDRIRTSINVLGDAMGAGIVYHYSKADLDAHDRLAATTRSHSIAMNDEKRQLAVYNSLPTDDEKHTH.

Topologically, residues methionine 1 to lysine 7 are cytoplasmic. The next 3 helical transmembrane spans lie at asparagine 8–leucine 28, leucine 47–glycine 67, and threonine 85–isoleucine 105. Over histidine 106–glycine 191 the chain is Extracellular. N-linked (GlcNAc...) asparagine glycans are attached at residues asparagine 166 and asparagine 176. 5 helical membrane passes run methionine 192–glycine 212, valine 228–isoleucine 248, valine 270–valine 290, alanine 358–valine 378, and isoleucine 389–valine 409.

This sequence belongs to the dicarboxylate/amino acid:cation symporter (DAACS) (TC 2.A.23) family.

Its subcellular location is the membrane. Transports L-glutamate and also L- and D-aspartate. Essential for terminating the postsynaptic action of glutamate by rapidly removing released glutamate from the synaptic cleft. Acts as a symport by cotransporting sodium. This chain is Excitatory amino acid transporter (GLT-1), found in Onchocerca volvulus.